Consider the following 187-residue polypeptide: MINVNTFKPGITFEDDGDIFVVLEAQHSKQGRGQANVKAKVKNLRTGSTVIKSYTGGVMVSRAHIDKRPMSYLYSDGENIILMDTETYEQVEIPVSHVEWELNFLKEGMIVKIRKYKEEILDIELDANVVLEVTEAPDAVKGNTANNPQKKVKLETGFELETPMFISEGEKIIVSTETGKYVGRANK.

Belongs to the elongation factor P family.

The protein resides in the cytoplasm. The protein operates within protein biosynthesis; polypeptide chain elongation. Its function is as follows. Involved in peptide bond synthesis. Stimulates efficient translation and peptide-bond synthesis on native or reconstituted 70S ribosomes in vitro. Probably functions indirectly by altering the affinity of the ribosome for aminoacyl-tRNA, thus increasing their reactivity as acceptors for peptidyl transferase. The protein is Elongation factor P of Mycoplasmopsis agalactiae (strain NCTC 10123 / CIP 59.7 / PG2) (Mycoplasma agalactiae).